The chain runs to 168 residues: Large ribosomal subunit protein uL10 (168 aa).

The protein belongs to the universal ribosomal protein uL10 family. Part of the ribosomal stalk of the 50S ribosomal subunit. The N-terminus interacts with L11 and the large rRNA to form the base of the stalk. The C-terminus forms an elongated spine to which L12 dimers bind in a sequential fashion forming a multimeric L10(L12)X complex.

In terms of biological role, forms part of the ribosomal stalk, playing a central role in the interaction of the ribosome with GTP-bound translation factors. This is Large ribosomal subunit protein uL10 (rplJ) from Mycoplasmopsis pulmonis (strain UAB CTIP) (Mycoplasma pulmonis).